The following is a 205-amino-acid chain: Ras-related protein Rab-1A (205 aa).

Position 2 is an N-acetylserine (serine 2). GTP contacts are provided by serine 20, glycine 21, glycine 23, lysine 24, serine 25, cysteine 26, glutamate 38, and threonine 43. Serine 25 is a Mg(2+) binding site. The Switch 1 motif lies at 34-48 (DTYTESYISTIGVDF). Position 43 (threonine 43) interacts with Mg(2+). Glycyl lysine isopeptide (Lys-Gly) (interchain with G-Cter in ubiquitin) cross-links involve residues lysine 49 and lysine 61. A Mg(2+)-binding site is contributed by aspartate 66. The Switch 2 motif lies at 66–83 (DTAGQERFRTITSSYYRG). The GTP site is built by glycine 69, asparagine 124, lysine 125, aspartate 127, alanine 155, and lysine 156. Positions 178-205 (PGATAGGAEKSNVKIQSTPVKQSGGGCC) are disordered. Serine 194 carries the phosphoserine; by CDK1 modification. Residues cysteine 204 and cysteine 205 are each lipidated (S-geranylgeranyl cysteine).

This sequence belongs to the small GTPase superfamily. Rab family. May interact with YIPF5. Interacts with C9orf72; the interaction mediates recruitment of RAB1A to the ATG1/ULK1 kinase complex. Interacts with GDI1; this promotes dissociation from membranes. It depends on Mg(2+) as a cofactor. Post-translationally, phosphorylated by CDK1 kinase during mitosis. Ubiquitinated via 'Lys-11'-linked ubiquitination on Lys-49 and Lys-61; impairing the recruitment of guanosine diphosphate (GDP) dissociation inhibitor 1/GDI1.

It is found in the golgi apparatus. It localises to the endoplasmic reticulum. The protein localises to the early endosome. The protein resides in the cytoplasm. Its subcellular location is the cytosol. It is found in the membrane. It localises to the melanosome. The catalysed reaction is GTP + H2O = GDP + phosphate + H(+). With respect to regulation, regulated by guanine nucleotide exchange factors (GEFs) which promote the exchange of bound GDP for free GTP. Regulated by GTPase activating proteins (GAPs) which increase the GTP hydrolysis activity. Inhibited by GDP dissociation inhibitors (GDIs). In terms of biological role, the small GTPases Rab are key regulators of intracellular membrane trafficking, from the formation of transport vesicles to their fusion with membranes. Rabs cycle between an inactive GDP-bound form and an active GTP-bound form that is able to recruit to membranes different sets of downstream effectors directly responsible for vesicle formation, movement, tethering and fusion. RAB1A regulates vesicular protein transport from the endoplasmic reticulum (ER) to the Golgi compartment and on to the cell surface, and plays a role in IL-8 and growth hormone secretion. Required to modulate the compacted morphology of the Golgi. Regulates the level of CASR present at the cell membrane. Plays a role in cell adhesion and cell migration, via its role in protein trafficking. Plays a role in autophagosome assembly and cellular defense reactions against pathogenic bacteria. Plays a role in microtubule-dependent protein transport by early endosomes and in anterograde melanosome transport. The polypeptide is Ras-related protein Rab-1A (RAB1A) (Sus scrofa (Pig)).